A 134-amino-acid polypeptide reads, in one-letter code: 6,7-dimethyl-8-ribityllumazine synthase (134 aa).

Residues F11, 43–45 (AYD), and 67–69 (AIV) contribute to the 5-amino-6-(D-ribitylamino)uracil site. 72 to 73 (DT) is a binding site for (2S)-2-hydroxy-3-oxobutyl phosphate. H75 functions as the Proton donor in the catalytic mechanism. 5-amino-6-(D-ribitylamino)uracil is bound at residue F100. Residue R115 participates in (2S)-2-hydroxy-3-oxobutyl phosphate binding.

It belongs to the DMRL synthase family.

It catalyses the reaction (2S)-2-hydroxy-3-oxobutyl phosphate + 5-amino-6-(D-ribitylamino)uracil = 6,7-dimethyl-8-(1-D-ribityl)lumazine + phosphate + 2 H2O + H(+). Its pathway is cofactor biosynthesis; riboflavin biosynthesis; riboflavin from 2-hydroxy-3-oxobutyl phosphate and 5-amino-6-(D-ribitylamino)uracil: step 1/2. In terms of biological role, catalyzes the formation of 6,7-dimethyl-8-ribityllumazine by condensation of 5-amino-6-(D-ribitylamino)uracil with 3,4-dihydroxy-2-butanone 4-phosphate. This is the penultimate step in the biosynthesis of riboflavin. The protein is 6,7-dimethyl-8-ribityllumazine synthase of Halorubrum lacusprofundi (strain ATCC 49239 / DSM 5036 / JCM 8891 / ACAM 34).